Here is a 214-residue protein sequence, read N- to C-terminus: Small ribosomal subunit protein uS2 (214 aa).

This sequence belongs to the universal ribosomal protein uS2 family.

The sequence is that of Small ribosomal subunit protein uS2 from Thermofilum pendens (strain DSM 2475 / Hrk 5).